The primary structure comprises 344 residues: tRNA N6-adenosine threonylcarbamoyltransferase (344 aa).

Fe cation contacts are provided by His111 and His115. Substrate contacts are provided by residues 134–138, Asp167, Gly180, and Asn272; that span reads LVSGG. Asp300 is a binding site for Fe cation.

Belongs to the KAE1 / TsaD family. Requires Fe(2+) as cofactor.

It localises to the cytoplasm. It carries out the reaction L-threonylcarbamoyladenylate + adenosine(37) in tRNA = N(6)-L-threonylcarbamoyladenosine(37) in tRNA + AMP + H(+). Its function is as follows. Required for the formation of a threonylcarbamoyl group on adenosine at position 37 (t(6)A37) in tRNAs that read codons beginning with adenine. Is involved in the transfer of the threonylcarbamoyl moiety of threonylcarbamoyl-AMP (TC-AMP) to the N6 group of A37, together with TsaE and TsaB. TsaD likely plays a direct catalytic role in this reaction. The polypeptide is tRNA N6-adenosine threonylcarbamoyltransferase (Idiomarina loihiensis (strain ATCC BAA-735 / DSM 15497 / L2-TR)).